A 28-amino-acid polypeptide reads, in one-letter code: Dermaseptin-2 (28 aa).

Q28 carries the post-translational modification Glutamine amide.

Belongs to the frog skin active peptide (FSAP) family. Dermaseptin subfamily. Expressed by the skin glands.

The protein resides in the secreted. Functionally, antimicrobial peptide with activity against the Gram-positive bacterium S.aureus, and the Gram-negative bacteria E.coli and P.aeruginosa. Probably acts by disturbing membrane functions with its amphipathic structure. Has an activity of stimulation of insulin release, which may protect the species from being eaten by predators by causing fatal hypoglycemia. Has hemolytic activity (60% hemolysis at 128 ug/ml). This Phyllomedusa tarsius (Brownbelly leaf frog) protein is Dermaseptin-2.